Here is a 577-residue protein sequence, read N- to C-terminus: Arginine--tRNA ligase (577 aa).

A 'HIGH' region motif is present at residues 122–132 (PNVAKEMHVGH).

The protein belongs to the class-I aminoacyl-tRNA synthetase family. Monomer.

It localises to the cytoplasm. It catalyses the reaction tRNA(Arg) + L-arginine + ATP = L-arginyl-tRNA(Arg) + AMP + diphosphate. The protein is Arginine--tRNA ligase (argS) of Salmonella typhimurium (strain SL1344).